The chain runs to 341 residues: ATPase GET3 (341 aa).

34 to 41 (KGGVGKTT) is a binding site for ATP. Residue Asp-63 is part of the active site. ATP-binding residues include Glu-245 and Asn-272. The Zn(2+) site is built by Cys-283 and Cys-286.

This sequence belongs to the arsA ATPase family. In terms of assembly, homodimer.

It is found in the cytoplasm. The protein localises to the endoplasmic reticulum. Functionally, ATPase required for the post-translational delivery of tail-anchored (TA) proteins to the endoplasmic reticulum. Recognizes and selectively binds the transmembrane domain of TA proteins in the cytosol. This complex then targets to the endoplasmic reticulum by membrane-bound receptors, where the tail-anchored protein is released for insertion. This process is regulated by ATP binding and hydrolysis. ATP binding drives the homodimer towards the closed dimer state, facilitating recognition of newly synthesized TA membrane proteins. ATP hydrolysis is required for insertion. Subsequently, the homodimer reverts towards the open dimer state, lowering its affinity for the membrane-bound receptor, and returning it to the cytosol to initiate a new round of targeting. This Paracoccidioides lutzii (strain ATCC MYA-826 / Pb01) (Paracoccidioides brasiliensis) protein is ATPase GET3.